The following is a 196-amino-acid chain: Small ribosomal subunit protein uS4c (196 aa).

The tract at residues 15–42 (LGALPGLTRKTPKSGSNQKKKFNSGKKE) is disordered. Positions 89 to 150 (MRLDNILFRL…NQRSKRLVQN (62 aa)) constitute an S4 RNA-binding domain.

It belongs to the universal ribosomal protein uS4 family. In terms of assembly, part of the 30S ribosomal subunit. Contacts protein S5. The interaction surface between S4 and S5 is involved in control of translational fidelity.

The protein localises to the plastid. Its subcellular location is the chloroplast. Functionally, one of the primary rRNA binding proteins, it binds directly to 16S rRNA where it nucleates assembly of the body of the 30S subunit. Its function is as follows. With S5 and S12 plays an important role in translational accuracy. This is Small ribosomal subunit protein uS4c (rps4) from Cenchrus longisetus (Feathertop).